Reading from the N-terminus, the 182-residue chain is Dirigent protein 5 (182 aa).

The N-terminal stretch at 1-23 (MVGQMKSFLFLFVFLVLTKTVIS) is a signal peptide. An intrachain disulfide couples Cys-35 to Cys-181. N-linked (GlcNAc...) asparagine glycans are attached at residues Asn-54 and Asn-118.

It belongs to the plant dirigent protein family. As to quaternary structure, homodimer. As to expression, confined to shoot meristem, vascular region of cotyledons and siliques abscission zone.

It is found in the secreted. It localises to the extracellular space. Its subcellular location is the apoplast. Dirigent proteins impart stereoselectivity on the phenoxy radical-coupling reaction, yielding optically active lignans from two molecules of coniferyl alcohol in the biosynthesis of lignans, flavonolignans, and alkaloids and thus plays a central role in plant secondary metabolism. Enantiocomplementary dirigent protein that mediates the laccase-catalyzed enantioselective oxidative phenol coupling of (E)-coniferyl alcohol to (-)-pinoresinol. The protein is Dirigent protein 5 (DIR5) of Arabidopsis thaliana (Mouse-ear cress).